The chain runs to 379 residues: ATP-sensitive inward rectifier potassium channel 10 (379 aa).

Residues 1–61 (MTSVAKVYYS…LKDLWTTFID (61 aa)) lie on the Cytoplasmic side of the membrane. Residue arginine 36 coordinates 1,2-dioctanoyl-sn-glycero-3-phospho-(1D-myo-inositol-4,5-bisphosphate). Residues 62–88 (MQWRYKLLLFSATFAGTWFLFGVVWYL) form a helical membrane-spanning segment. At 89 to 114 (VAVAHGDLLELGPPANHTPCVVQVHT) the chain is on the extracellular side. A disulfide bridge connects residues cysteine 108 and cysteine 140. An intramembrane region (discontinuously helical; Pore-forming) is located at residues 115–131 (LTGAFLFSLESQTTIGY). The Selectivity filter signature appears at 128-133 (TIGYGF). Topologically, residues 132-140 (GFRYISEEC) are extracellular. Residues 141-166 (PLAIVLLIAQLVLTTILEIFITGTFL) form a helical membrane-spanning segment. At 167 to 379 (AKIARPKKRA…SALSVRISNV (213 aa)) the chain is on the cytoplasmic side. 1,2-dioctanoyl-sn-glycero-3-phospho-(1D-myo-inositol-4,5-bisphosphate) is bound by residues lysine 168, arginine 171, and lysine 173. 210–217 (GCQVTGKL) serves as a coordination point for ATP.

This sequence belongs to the inward rectifier-type potassium channel (TC 1.A.2.1) family. KCNJ10 subfamily. Homotetramer. In kidney cells, it forms heteromeric channels with Kir5.1/KCNJ16; this interaction is required for KCNJ16 localization to the basolateral membrane. Interacts with MAGI1, alone and possibly as a heteromer with KCNJ16; this interaction may facilitate KCNJ10/KCNJ16 potassium channel expression at the basolateral membrane in kidney cells. Interacts with PATJ. Widely expressed in adult brain, including in the neocortex, the stratum pyrimadale of the hippocampus and the piriform cortex. Expressed by cultured astrocytes and also by cocultured cortical neurons (at protein level). In the distal segment of the nephron, expressed in the distal convoluted tubule, the connecting tubule, and the early cortical collecting duct.

Its subcellular location is the membrane. It is found in the basolateral cell membrane. It carries out the reaction K(+)(in) = K(+)(out). With respect to regulation, channel activity is strongly regulated by variations of cytosolic pH; channels are activated by alkaline and inhibited by acidic pH values. Activated by phosphatidylinositol 4,5 biphosphate (PtdIns(4,5)P2). Inhibited by Ba(2+) and Cs(+). Functionally, may be responsible for potassium buffering action of glial cells in the brain. Inward rectifier potassium channels are characterized by a greater tendency to allow potassium to flow into the cell rather than out of it. Their voltage dependence is regulated by the concentration of extracellular potassium; as external potassium is raised, the voltage range of the channel opening shifts to more positive voltages. The inward rectification is mainly due to the blockage of outward current by internal magnesium. Can be blocked by extracellular barium and cesium. In the kidney, together with KCNJ16, mediates basolateral K(+) recycling in distal tubules; this process is critical for Na(+) reabsorption at the tubules. This Mus musculus (Mouse) protein is ATP-sensitive inward rectifier potassium channel 10.